Consider the following 261-residue polypeptide: uncharacterized protein (261 aa).

A signal peptide spans 1-22 (MRDSKRVVLYISIIVLSIFIIG). Residue C23 is the site of N-palmitoyl cysteine attachment. Residue C23 is the site of S-diacylglycerol cysteine attachment.

This sequence belongs to the staphylococcal tandem lipoprotein family.

The protein resides in the cell membrane. This is an uncharacterized protein from Staphylococcus aureus (strain Mu50 / ATCC 700699).